The sequence spans 96 residues: Co-chaperonin GroES (96 aa).

Belongs to the GroES chaperonin family. As to quaternary structure, heptamer of 7 subunits arranged in a ring. Interacts with the chaperonin GroEL.

Its subcellular location is the cytoplasm. Functionally, together with the chaperonin GroEL, plays an essential role in assisting protein folding. The GroEL-GroES system forms a nano-cage that allows encapsulation of the non-native substrate proteins and provides a physical environment optimized to promote and accelerate protein folding. GroES binds to the apical surface of the GroEL ring, thereby capping the opening of the GroEL channel. The protein is Co-chaperonin GroES of Photobacterium profundum (strain SS9).